Here is a 162-residue protein sequence, read N- to C-terminus: Cyclic pyranopterin monophosphate synthase (162 aa).

Substrate is bound by residues 75–77 (MCH) and 115–116 (ME). Asp-130 is an active-site residue.

The protein belongs to the MoaC family. In terms of assembly, homohexamer; trimer of dimers.

The enzyme catalyses (8S)-3',8-cyclo-7,8-dihydroguanosine 5'-triphosphate = cyclic pyranopterin phosphate + diphosphate. The protein operates within cofactor biosynthesis; molybdopterin biosynthesis. In terms of biological role, catalyzes the conversion of (8S)-3',8-cyclo-7,8-dihydroguanosine 5'-triphosphate to cyclic pyranopterin monophosphate (cPMP). This chain is Cyclic pyranopterin monophosphate synthase, found in Geobacillus thermodenitrificans (strain NG80-2).